The primary structure comprises 122 residues: Large ribosomal subunit protein bL12 (122 aa).

The protein belongs to the bacterial ribosomal protein bL12 family. In terms of assembly, homodimer. Part of the ribosomal stalk of the 50S ribosomal subunit. Forms a multimeric L10(L12)X complex, where L10 forms an elongated spine to which 2 to 4 L12 dimers bind in a sequential fashion. Binds GTP-bound translation factors.

Functionally, forms part of the ribosomal stalk which helps the ribosome interact with GTP-bound translation factors. Is thus essential for accurate translation. The sequence is that of Large ribosomal subunit protein bL12 from Clostridium botulinum (strain Langeland / NCTC 10281 / Type F).